A 108-amino-acid chain; its full sequence is Thioredoxin (108 aa).

The region spanning 2 to 108 is the Thioredoxin domain; sequence NKIIELTDQN…LKEFLDENIN (107 aa). A disulfide bridge connects residues cysteine 32 and cysteine 35.

Belongs to the thioredoxin family.

In terms of biological role, participates in various redox reactions through the reversible oxidation of its active center dithiol to a disulfide and catalyzes dithiol-disulfide exchange reactions. The chain is Thioredoxin (trxA) from Buchnera aphidicola subsp. Acyrthosiphon pisum (strain APS) (Acyrthosiphon pisum symbiotic bacterium).